A 206-amino-acid polypeptide reads, in one-letter code: High-affinity nitrate transporter-activating protein 2.1 (206 aa).

An N-terminal signal peptide occupies residues methionine 1–alanine 27. A helical transmembrane segment spans residues valine 180–glutamate 200.

Belongs to the NAR2 family. As to quaternary structure, heterotetramer composed of two NRT2.1, NRT2.2 or NRT2.3 and two NAR2.1. Interacts with NRT2.1, NRT2.2 and isoform 1 of NRT2.3. In terms of tissue distribution, expressed in epidermal cells of primary and lateral roots, root-shoot junction zone, vascular tissues of adventitious root primordia, stems and coleoptiles of germinating seeds.

It is found in the cell membrane. Functionally, acts as a dual component transporter with NTR2.1, NRT2.2 and NRT2.3. Required for high-affinity nitrate transport. Involved in the regulation of NRT2.1, NRT2.2 and NRT2.3 expression, and in both, HATS (high-affinity transport system) and LATS (low-affinity transport system) activities in plant roots. Imports nitrate with high affinity when expressed with NTR2.1, NTR2.2 or NTR2.3 in a heterologous system (Xenopus oocytes). The chain is High-affinity nitrate transporter-activating protein 2.1 (NAR2.1) from Oryza sativa subsp. japonica (Rice).